The following is a 102-amino-acid chain: Large ribosomal subunit protein bL21 (102 aa).

Belongs to the bacterial ribosomal protein bL21 family. In terms of assembly, part of the 50S ribosomal subunit. Contacts protein L20.

Its function is as follows. This protein binds to 23S rRNA in the presence of protein L20. In Ehrlichia chaffeensis (strain ATCC CRL-10679 / Arkansas), this protein is Large ribosomal subunit protein bL21.